A 483-amino-acid chain; its full sequence is NAD-dependent protein deacetylase SRT1 (483 aa).

Residues 27 to 270 enclose the Deacetylase sirtuin-type domain; that stretch reads PELLHKKIEE…MYMMNLRIPP (244 aa). NAD(+) is bound by residues 53-57, 63-65, and 114-117; these read AGIST, DFR, and QNVD. The active-site Proton acceptor is H134. 4 residues coordinate Zn(2+): C142, C145, C167, and C172. NAD(+)-binding positions include 209-211 and 235-237; these read GTS and NLQ.

Belongs to the sirtuin family. Class IV subfamily. Zn(2+) is required as a cofactor.

It is found in the nucleus. The enzyme catalyses N(6)-acetyl-L-lysyl-[protein] + NAD(+) + H2O = 2''-O-acetyl-ADP-D-ribose + nicotinamide + L-lysyl-[protein]. In terms of biological role, NAD-dependent protein deacetylase. Has deacetylase activity towards H3K9Ac. May have a function in the safeguard against genome instability and DNA damage to ensure plant cell growth. May negatively regulate metabolic signal transduction involving methanol and jasmonates during leaf senescence. Required for histone H3K9Ac deacetylation and repression of AP2-1/RSR1 and amylase genes during early seed development. Functions as an epigenetic regulator to repress the expression of glycolytic genes and glycolysis in seedlings. Reduces lysine acetylation of the glycolytic glyceraldehyde-3-phosphate dehydrogenase (GAPDH), which is found to also function as an activator of glycolytic gene expression. The sequence is that of NAD-dependent protein deacetylase SRT1 from Oryza sativa subsp. indica (Rice).